The chain runs to 259 residues: uncharacterized protein (259 aa).

The 240-residue stretch at 4–243 (INLKNINLTR…KILTDFYQEK (240 aa)) folds into the ABC transporter domain. Residue 36–43 (GLNGSGKS) coordinates ATP.

This sequence belongs to the ABC transporter superfamily.

This is an uncharacterized protein from Lactococcus lactis subsp. lactis (strain IL1403) (Streptococcus lactis).